The chain runs to 631 residues: Arginine--tRNA ligase (631 aa).

Positions 132–142 match the 'HIGH' region motif; it reads PNIAKPLHVGH.

Belongs to the class-I aminoacyl-tRNA synthetase family.

It localises to the cytoplasm. It catalyses the reaction tRNA(Arg) + L-arginine + ATP = L-arginyl-tRNA(Arg) + AMP + diphosphate. This Halobacterium salinarum (strain ATCC 700922 / JCM 11081 / NRC-1) (Halobacterium halobium) protein is Arginine--tRNA ligase.